The sequence spans 197 residues: Recombination protein RecR (197 aa).

The segment at 57 to 72 (CSRCGYLTDFDPCLIC) adopts a C4-type zinc-finger fold. One can recognise a Toprim domain in the interval 80–174 (SLICIGEESS…KVTRLAHGLP (95 aa)).

Belongs to the RecR family.

May play a role in DNA repair. It seems to be involved in an RecBC-independent recombinational process of DNA repair. It may act with RecF and RecO. This is Recombination protein RecR from Syntrophomonas wolfei subsp. wolfei (strain DSM 2245B / Goettingen).